Consider the following 245-residue polypeptide: Orotidine 5'-phosphate decarboxylase (245 aa).

Residues Asp-22, Lys-44, 71 to 80 (DLKFHDIPNT), Thr-131, Arg-192, Gln-201, Gly-221, and Arg-222 contribute to the substrate site. Residue Lys-73 is the Proton donor of the active site.

It belongs to the OMP decarboxylase family. Type 1 subfamily. As to quaternary structure, homodimer.

It catalyses the reaction orotidine 5'-phosphate + H(+) = UMP + CO2. Its pathway is pyrimidine metabolism; UMP biosynthesis via de novo pathway; UMP from orotate: step 2/2. Functionally, catalyzes the decarboxylation of orotidine 5'-monophosphate (OMP) to uridine 5'-monophosphate (UMP). This chain is Orotidine 5'-phosphate decarboxylase, found in Salmonella typhi.